The following is a 562-amino-acid chain: Chaperonin GroEL 1 (562 aa).

ATP contacts are provided by residues 30-33 (TLGP), Lys-51, 87-91 (DGTTT), Gly-415, 478-480 (NAA), and Asp-494.

The protein belongs to the chaperonin (HSP60) family. As to quaternary structure, forms a cylinder of 14 subunits composed of two heptameric rings stacked back-to-back. Interacts with the co-chaperonin GroES.

It localises to the cytoplasm. The enzyme catalyses ATP + H2O + a folded polypeptide = ADP + phosphate + an unfolded polypeptide.. Together with its co-chaperonin GroES, plays an essential role in assisting protein folding. The GroEL-GroES system forms a nano-cage that allows encapsulation of the non-native substrate proteins and provides a physical environment optimized to promote and accelerate protein folding. The protein is Chaperonin GroEL 1 of Sorangium cellulosum (strain So ce56) (Polyangium cellulosum (strain So ce56)).